A 388-amino-acid polypeptide reads, in one-letter code: 4-hydroxy-3-methylbut-2-en-1-yl diphosphate synthase (flavodoxin) (388 aa).

Residues C281, C284, C316, and E323 each coordinate [4Fe-4S] cluster.

It belongs to the IspG family. [4Fe-4S] cluster serves as cofactor.

The enzyme catalyses (2E)-4-hydroxy-3-methylbut-2-enyl diphosphate + oxidized [flavodoxin] + H2O + 2 H(+) = 2-C-methyl-D-erythritol 2,4-cyclic diphosphate + reduced [flavodoxin]. The protein operates within isoprenoid biosynthesis; isopentenyl diphosphate biosynthesis via DXP pathway; isopentenyl diphosphate from 1-deoxy-D-xylulose 5-phosphate: step 5/6. Its function is as follows. Converts 2C-methyl-D-erythritol 2,4-cyclodiphosphate (ME-2,4cPP) into 1-hydroxy-2-methyl-2-(E)-butenyl 4-diphosphate. In Arthrobacter sp. (strain FB24), this protein is 4-hydroxy-3-methylbut-2-en-1-yl diphosphate synthase (flavodoxin).